The chain runs to 38 residues: Mu/omega-theraphotoxin-Mb1a (38 aa).

Disulfide bonds link Cys-7–Cys-21, Cys-14–Cys-26, and Cys-20–Cys-33. Thr-38 is subject to Threonine amide.

This sequence belongs to the neurotoxin 10 (Hwtx-1) family. 28 (Jztx-11) subfamily. Expressed by the venom gland.

Its subcellular location is the secreted. In terms of biological role, paralytic toxin that inhibits insect voltage-gated sodium (Nav) and calcium (Cav) channels in P.americana (American cockroach) dorsal unpaired median (DUM) neurons, and inhibits the B.germanica (German cockroach) Nav channel (BgNaV1). Also shows a delay in fast inactivation when tested on BgNaV1. May act as a gating-modifier toxin on Nav and as a pore blocker on Cav. In vivo, reversibly paralyzes both L.cuprina (Australian sheep blowfly) and M.domestica (housefly), but does not affect larvae of H.armigera (cotton bollworms). The protein is Mu/omega-theraphotoxin-Mb1a of Monocentropus balfouri (Socotra Island blue baboon tarantula).